The sequence spans 943 residues: Translation initiation factor IF-2 (943 aa).

The span at 99–113 shows a compositional bias: low complexity; that stretch reads VKAAQTQAAPVQPEQ. The segment at 99-354 is disordered; that stretch reads VKAAQTQAAP…LEPNQHAFQA (256 aa). Residues 117 to 141 show a composition bias toward basic and acidic residues; it reads DAVKARAEAAARAEARAKAEAEAAK. Positions 145–172 are enriched in low complexity; the sequence is AKAGNKAKPAAQKPTEAKAETAPVAAET. A compositionally biased stretch (basic and acidic residues) spans 173 to 197; that stretch reads KPAEPKEKAVKPKHERNGKGKDAKK. The segment covering 200-215 has biased composition (low complexity); sequence KPAAPAVPQPVVSAEE. Residues 216-250 are compositionally biased toward basic and acidic residues; sequence QAQRDEEARRAAALRAHQEALLKEKQERQARREAM. Positions 251–264 are enriched in low complexity; the sequence is KQQAEQQAKAAQEA. Composition is skewed to basic and acidic residues over residues 295–308 and 319–335; these read AKKE…DEGQ and GGRD…ERVR. Residues 443–612 form the tr-type G domain; it reads PRPPVVTVMG…LLEAEVLELT (170 aa). The segment at 452–459 is G1; that stretch reads GHVDHGKT. 452–459 is a GTP binding site; sequence GHVDHGKT. Positions 477–481 are G2; it reads GITQH. Residues 498-501 form a G3 region; sequence DTPG. GTP is bound by residues 498–502 and 552–555; these read DTPGH and NKID. The G4 stretch occupies residues 552–555; it reads NKID. Residues 588-590 form a G5 region; sequence SAK.

Belongs to the TRAFAC class translation factor GTPase superfamily. Classic translation factor GTPase family. IF-2 subfamily.

The protein localises to the cytoplasm. Its function is as follows. One of the essential components for the initiation of protein synthesis. Protects formylmethionyl-tRNA from spontaneous hydrolysis and promotes its binding to the 30S ribosomal subunits. Also involved in the hydrolysis of GTP during the formation of the 70S ribosomal complex. This Neisseria gonorrhoeae (strain ATCC 700825 / FA 1090) protein is Translation initiation factor IF-2.